Consider the following 130-residue polypeptide: MAKVQYFGTGRRKKSIARVRLVPGEGKITINKRSIEEYFGLETLRVIVNQPLVLTSTNGKFDVLVNVHGGGFTGQAGAIRHGISRALLKADENLRLELKKAGFLTRDPRMKERKKYGLKKARRAPQFSKR.

The interval 109 to 130 (RMKERKKYGLKKARRAPQFSKR) is disordered. Residues 111 to 130 (KERKKYGLKKARRAPQFSKR) are compositionally biased toward basic residues.

The protein belongs to the universal ribosomal protein uS9 family.

This Clostridium kluyveri (strain NBRC 12016) protein is Small ribosomal subunit protein uS9.